Consider the following 172-residue polypeptide: Early nodulin-like protein 17 (172 aa).

Positions 1 to 26 (MARFTVLITAVVLAFLMAAPMPGVTA) are cleaved as a signal peptide. The 101-residue stretch at 27 to 127 (KKYTVGENKF…GMKLSVKVEK (101 aa)) folds into the Phytocyanin domain. Residues N42, N73, N88, and N101 are each glycosylated (N-linked (GlcNAc...) asparagine). Residues C80 and C115 are joined by a disulfide bond. Residue G141 is the site of GPI-anchor amidated glycine attachment. The propeptide at 142–172 (SVSMVTGLAQFMIPVSLFAFPAMWDVISRMW) is removed in mature form.

It belongs to the early nodulin-like (ENODL) family.

The protein localises to the cell membrane. Its function is as follows. May act as a carbohydrate transporter. This is Early nodulin-like protein 17 from Arabidopsis thaliana (Mouse-ear cress).